The primary structure comprises 96 residues: Co-chaperonin GroES (96 aa).

The protein belongs to the GroES chaperonin family. As to quaternary structure, heptamer of 7 subunits arranged in a ring. Interacts with the chaperonin GroEL.

It is found in the cytoplasm. Functionally, together with the chaperonin GroEL, plays an essential role in assisting protein folding. The GroEL-GroES system forms a nano-cage that allows encapsulation of the non-native substrate proteins and provides a physical environment optimized to promote and accelerate protein folding. GroES binds to the apical surface of the GroEL ring, thereby capping the opening of the GroEL channel. The sequence is that of Co-chaperonin GroES from Shewanella sediminis (strain HAW-EB3).